The primary structure comprises 174 residues: Pediocin PA-1 biosynthesis protein PedC (174 aa).

Functionally, probably involved in pediocin PA-1 biosynthesis. The protein is Pediocin PA-1 biosynthesis protein PedC (pedC) of Pediococcus acidilactici.